Consider the following 396-residue polypeptide: MAKLDAYFGEYGGQYVPQILVPALEQLEQAFIDAQEDPDFRSEFMTLLQEYAGRPTALTLCRNLTKGTKTKLYLKREDLLHGGAHKTNQVLGQALLAKRMGKDEIIAETGAGQHGVATALACALLGLKCRVYMGAKDVERQSPNVFRMKLMGAEVIPVHSGSATLKDACNEALRDWSATYETAHYLLGTAAGPHPFPTIVREFQRMIGEETKMQILAREGRLPDAVIACVGGGSNAIGMFADFIEEESVKLIGVEPAGKGIDTDQHGAPLKHGKTGIFFGMKAPLMQDEHGQIEESYSVSAGLDFPSVGPQHAHLNAIGRAEYGAVTDDEALDAFKILARNEGIIPALESSHALAYALQLAQAEPEKEQLLVVNLSGRGDKDIFTVHDILKEKGEI.

Lys86 is modified (N6-(pyridoxal phosphate)lysine).

It belongs to the TrpB family. Tetramer of two alpha and two beta chains. It depends on pyridoxal 5'-phosphate as a cofactor.

The enzyme catalyses (1S,2R)-1-C-(indol-3-yl)glycerol 3-phosphate + L-serine = D-glyceraldehyde 3-phosphate + L-tryptophan + H2O. It participates in amino-acid biosynthesis; L-tryptophan biosynthesis; L-tryptophan from chorismate: step 5/5. The beta subunit is responsible for the synthesis of L-tryptophan from indole and L-serine. The chain is Tryptophan synthase beta chain from Aliivibrio fischeri (strain ATCC 700601 / ES114) (Vibrio fischeri).